Consider the following 62-residue polypeptide: Photosystem II reaction center X protein (62 aa).

Residues 26–46 (IASFFAAALLIVIPAATFLIF) form a helical membrane-spanning segment.

It belongs to the PsbX family. Type 2 subfamily. As to quaternary structure, PSII consists of a core antenna complex that captures photons, and an electron transfer chain that converts photonic excitation into a charge separation. PSII forms dimeric complexes.

The protein resides in the cellular thylakoid membrane. Involved in the binding and/or turnover of quinones at the Q(B) site of Photosystem II. The chain is Photosystem II reaction center X protein from Prochlorococcus marinus (strain MIT 9515).